Here is a 186-residue protein sequence, read N- to C-terminus: Large ribosomal subunit protein uL5 (186 aa).

This sequence belongs to the universal ribosomal protein uL5 family. As to quaternary structure, part of the 50S ribosomal subunit; part of the 5S rRNA/L5/L18/L25 subcomplex. Contacts the 5S rRNA and the P site tRNA. Forms a bridge to the 30S subunit in the 70S ribosome.

This is one of the proteins that bind and probably mediate the attachment of the 5S RNA into the large ribosomal subunit, where it forms part of the central protuberance. In the 70S ribosome it contacts protein S13 of the 30S subunit (bridge B1b), connecting the 2 subunits; this bridge is implicated in subunit movement. Contacts the P site tRNA; the 5S rRNA and some of its associated proteins might help stabilize positioning of ribosome-bound tRNAs. The polypeptide is Large ribosomal subunit protein uL5 (Ruegeria pomeroyi (strain ATCC 700808 / DSM 15171 / DSS-3) (Silicibacter pomeroyi)).